A 501-amino-acid chain; its full sequence is Carboxypeptidase 1 (501 aa).

The 494-residue stretch at 3–496 (IHTYEKEFFD…LIDYLSNKYS (494 aa)) folds into the Peptidase M32 domain. The HPF signature appears at 234 to 236 (HPF). The DXRXT signature appears at 244 to 248 (DVRVT). Zn(2+) is bound at residue H265. The short motif at 265–269 (HECGH) is the HEXXH element. E266 acts as the Proton donor/acceptor in catalysis. Zn(2+) is bound by residues H269 and E295. An HES/GQ motif is present at residues 294–297 (HESQ). Positions 347-352 (IRVEAD) match the I/NRXXA/SD motif. The GXXQDXHW signature appears at 402–409 (GILQDVHW).

This sequence belongs to the peptidase M32 family. As to quaternary structure, homodimer. Zn(2+) is required as a cofactor.

The enzyme catalyses Release of a C-terminal amino acid with broad specificity, except for -Pro.. In terms of biological role, broad specificity carboxypetidase that releases amino acids sequentially from the C-terminus, including neutral, aromatic, polar and basic residues. Has lower activity with substrates ending with His or Trp. This is Carboxypeptidase 1 (ypwA) from Bacillus subtilis (strain 168).